Consider the following 257-residue polypeptide: Membrane protein insertase YidC 1 (257 aa).

A signal peptide spans 1–20; sequence MYRKFGMAAMLVSILLLMTG. The N-palmitoyl cysteine moiety is linked to residue Cys21. Cys21 is lipidated: S-diacylglycerol cysteine. The next 5 membrane-spanning stretches (helical) occupy residues 35–55, 59–79, 129–149, 160–180, and 205–225; these read IWDSYFVYPLSWLMIYFANAF, FGLAIIVVTLLIRLLILPLMI, LAGCFPVLIQMPILLAFYHAI, FLWFVLNQPDPILLPIIAGIT, and VMILVFAMFLPSSLALYWVIG.

The protein belongs to the OXA1/ALB3/YidC family. Type 2 subfamily.

It localises to the cell membrane. Required for the insertion and/or proper folding and/or complex formation of integral membrane proteins into the membrane. Involved in integration of membrane proteins that insert both dependently and independently of the Sec translocase complex, as well as at least some lipoproteins. This chain is Membrane protein insertase YidC 1, found in Halalkalibacterium halodurans (strain ATCC BAA-125 / DSM 18197 / FERM 7344 / JCM 9153 / C-125) (Bacillus halodurans).